Here is a 1876-residue protein sequence, read N- to C-terminus: Phenolphthiocerol/phthiocerol polyketide synthase subunit A (1876 aa).

The 75-residue stretch at 9 to 83 folds into the Carrier 1 domain; sequence ADLRHWLIDY…ALAAYLAAPE (75 aa). At S43 the chain carries O-(pantetheine 4'-phosphoryl)serine. The 426-residue stretch at 101–526 folds into the Ketosynthase family 3 (KS3) domain; sequence DEPIAVVGMG…GTNAHVVIEQ (426 aa). Active-site for beta-ketoacyl synthase activity residues include C273, H408, and H448. The acyltransferase stretch occupies residues 624–950; sequence EGSPGPGTVF…NLNKAHTIHP (327 aa). Residue S720 is the For malonyltransferase activity of the active site. The segment at 997–1112 is N-terminal hotdog fold; sequence HTTVATVSAS…AQLSSSPSDS (116 aa). One can recognise a PKS/mFAS DH domain in the interval 997–1267; that stretch reads HTTVATVSAS…YRALDFGLDV (271 aa). The active-site Proton acceptor; for dehydratase activity is H1027. Residues 1104–1130 are disordered; sequence QLSSSPSDSASSLNEHHRANGQPPERA. Positions 1106–1115 are enriched in low complexity; sequence SSSPSDSASS. Residues 1130 to 1267 are C-terminal hotdog fold; it reads AHRDLIPDLA…YRALDFGLDV (138 aa). Residue D1186 is the Proton donor; for dehydratase activity of the active site. The interval 1491 to 1728 is beta-ketoacyl reductase; it reads AAYLITGGLG…DGYDVAQAVV (238 aa). 1492-1551 serves as a coordination point for NADP(+); the sequence is AYLITGGLGALGLLMADWLADRGAHRLVLTGRTPLPPRRDWQLDTLDTELRRRIDAIRAL. The region spanning 1759–1836 is the Carrier 2 domain; it reads EVRSELEQGL…SLASYLAKRV (78 aa). O-(pantetheine 4'-phosphoryl)serine is present on S1796.

Requires NADP(+) as cofactor. The cofactor is pantetheine 4'-phosphate.

It carries out the reaction icosanoyl-[(phenol)carboxyphthiodiolenone synthase] + 2 (S)-methylmalonyl-CoA + 3 malonyl-CoA + 5 NADPH + 10 H(+) = C32-carboxyphthiodiolenone-[(phenol)carboxyphthiodiolenone synthase] + 5 CO2 + 5 NADP(+) + 5 CoA + 2 H2O. The enzyme catalyses docosanoyl-[(phenol)carboxyphthiodiolenone synthase] + 2 (S)-methylmalonyl-CoA + 3 malonyl-CoA + 5 NADPH + 10 H(+) = C34-carboxyphthiodiolenone-[(phenol)carboxyphthiodiolenone synthase] + 5 CO2 + 5 NADP(+) + 5 CoA + 2 H2O. The catalysed reaction is 17-(4-hydroxyphenyl)heptadecanoyl-[(phenol)carboxyphthiodiolenone synthase] + 2 (S)-methylmalonyl-CoA + 3 malonyl-CoA + 5 NADPH + 10 H(+) = C35-(phenol)carboxyphthiodiolenone-[(phenol)carboxyphthiodiolenone synthase] + 5 CO2 + 5 NADP(+) + 5 CoA + 2 H2O. It catalyses the reaction 19-(4-hydroxyphenyl)nonadecanoyl-[(phenol)carboxyphthiodiolenone synthase] + 2 (S)-methylmalonyl-CoA + 3 malonyl-CoA + 5 NADPH + 10 H(+) = C37-(phenol)carboxyphthiodiolenone-[(phenol)carboxyphthiodiolenone synthase] + 5 CO2 + 5 NADP(+) + 5 CoA + 2 H2O. It participates in lipid metabolism; fatty acid biosynthesis. In terms of biological role, part of the PpsABCDE complex involved in the biosynthesis of the lipid core common to phthiocerols and phenolphthiocerols by successive additions of malonyl-CoA or methylmalonyl-CoA extender units. PpsA can accept as substrate the activated forms of either icosanoyl (C20), docosanoyl (C22) or lignoceroyl (C24) groups from FadD26, or a (4-hydroxyphenyl)-C17 or (4-hydroxyphenyl)-C19 fatty acyl from FadD29. PpsA initiates the biosynthesis and extends its substrate using a malonyl-CoA extender unit. The PpsB and PpsC proteins add the second and third malonyl-CoA extender units. PpsD adds an (R)-methylmalonyl unit and PpsE adds a second (R)-methylmalonyl unit. The incorporation of the methylmalonyl units results in formation of two branched methyl groups in the elongated product. This Mycobacterium bovis (strain ATCC BAA-935 / AF2122/97) protein is Phenolphthiocerol/phthiocerol polyketide synthase subunit A (ppsA).